We begin with the raw amino-acid sequence, 82 residues long: Small ribosomal subunit protein bS16 (82 aa).

This sequence belongs to the bacterial ribosomal protein bS16 family.

This is Small ribosomal subunit protein bS16 from Deinococcus geothermalis (strain DSM 11300 / CIP 105573 / AG-3a).